The sequence spans 261 residues: ATP synthase subunit a (261 aa).

5 helical membrane-spanning segments follow: residues 28–48 (AVHL…LTIF), 89–109 (IAPL…MDWV), 140–160 (NITF…SIKV), 203–223 (LFGN…IGVF), and 229–249 (FLWA…FMML).

The protein belongs to the ATPase A chain family. F-type ATPases have 2 components, CF(1) - the catalytic core - and CF(0) - the membrane proton channel. CF(1) has five subunits: alpha(3), beta(3), gamma(1), delta(1), epsilon(1). CF(0) has three main subunits: a(1), b(2) and c(9-12). The alpha and beta chains form an alternating ring which encloses part of the gamma chain. CF(1) is attached to CF(0) by a central stalk formed by the gamma and epsilon chains, while a peripheral stalk is formed by the delta and b chains.

Its subcellular location is the cell inner membrane. Key component of the proton channel; it plays a direct role in the translocation of protons across the membrane. The sequence is that of ATP synthase subunit a from Colwellia psychrerythraea (strain 34H / ATCC BAA-681) (Vibrio psychroerythus).